The chain runs to 483 residues: Protein nucleotidyltransferase YdiU (483 aa).

8 residues coordinate ATP: G87, G89, R90, K110, D122, G123, R173, and R180. D249 (proton acceptor) is an active-site residue. Residues N250 and D259 each coordinate Mg(2+). Residue D259 coordinates ATP.

Belongs to the SELO family. The cofactor is Mg(2+). Requires Mn(2+) as cofactor.

The catalysed reaction is L-seryl-[protein] + ATP = 3-O-(5'-adenylyl)-L-seryl-[protein] + diphosphate. It catalyses the reaction L-threonyl-[protein] + ATP = 3-O-(5'-adenylyl)-L-threonyl-[protein] + diphosphate. It carries out the reaction L-tyrosyl-[protein] + ATP = O-(5'-adenylyl)-L-tyrosyl-[protein] + diphosphate. The enzyme catalyses L-histidyl-[protein] + UTP = N(tele)-(5'-uridylyl)-L-histidyl-[protein] + diphosphate. The catalysed reaction is L-seryl-[protein] + UTP = O-(5'-uridylyl)-L-seryl-[protein] + diphosphate. It catalyses the reaction L-tyrosyl-[protein] + UTP = O-(5'-uridylyl)-L-tyrosyl-[protein] + diphosphate. Nucleotidyltransferase involved in the post-translational modification of proteins. It can catalyze the addition of adenosine monophosphate (AMP) or uridine monophosphate (UMP) to a protein, resulting in modifications known as AMPylation and UMPylation. In Yersinia pseudotuberculosis serotype O:1b (strain IP 31758), this protein is Protein nucleotidyltransferase YdiU.